A 196-amino-acid polypeptide reads, in one-letter code: SAGA-associated factor 11 homolog (196 aa).

The interval 1-22 (MSAANMPTTTGAQGSGNQVPTT) is disordered. The segment at 106–127 (CTCPNCDRLVAAARFAPHLEKC) adopts an SGF11-type zinc-finger fold. A disordered region spans residues 141-196 (RLATKEGATSAHLHSSGNTGGTDDEDDVDWSSDKRRKKSNQNSRNNGSKKNNGKTF). Ser-172 bears the Phosphoserine mark. The span at 180-196 (NQNSRNNGSKKNNGKTF) shows a compositional bias: low complexity.

The protein belongs to the SGF11 family. In terms of assembly, component of some SAGA transcription coactivator-HAT complexes, at least composed of Ada2b, not/nonstop, Pcaf/Gcn5, Sgf11 and Spt3. Within the SAGA complex, Sgf11, e(y)2, and not/nonstop form an additional subcomplex of SAGA called the DUB module (deubiquitination module). Interacts directly with not/nonstop. Interacts with the AMEX complex component xmas-2. Interacts with Cbp80; important for promoter recruitment of Sgf11 that is not associated with the DUB module.

It is found in the nucleus. The protein resides in the nucleoplasm. The protein localises to the cytoplasm. Component of the transcription regulatory histone acetylation (HAT) complex SAGA, a multiprotein complex that activates transcription by remodeling chromatin and mediating histone acetylation and deubiquitination. Within the SAGA complex, participates in a subcomplex that specifically deubiquitinates histone H2B. The SAGA complex is recruited to specific gene promoters by activators, where it is required for transcription. Required for nuclear receptor-mediated transactivation. Binds independently on SAGA to promoters in an RNA-dependent manner. Binds to mRNA and is essential for total mRNA export from the nucleus. Required to counteract heterochromatin silencing. Controls the development of neuronal connectivity in visual system by being required for accurate axon targeting in the optic lobe. Required for expression of ecdysone-induced genes such as br/broad. The sequence is that of SAGA-associated factor 11 homolog from Drosophila simulans (Fruit fly).